A 192-amino-acid polypeptide reads, in one-letter code: Imidazoleglycerol-phosphate dehydratase (192 aa).

It belongs to the imidazoleglycerol-phosphate dehydratase family.

It localises to the cytoplasm. It catalyses the reaction D-erythro-1-(imidazol-4-yl)glycerol 3-phosphate = 3-(imidazol-4-yl)-2-oxopropyl phosphate + H2O. It participates in amino-acid biosynthesis; L-histidine biosynthesis; L-histidine from 5-phospho-alpha-D-ribose 1-diphosphate: step 6/9. This Staphylococcus aureus (strain bovine RF122 / ET3-1) protein is Imidazoleglycerol-phosphate dehydratase.